Here is a 317-residue protein sequence, read N- to C-terminus: Ribonuclease Z (317 aa).

H61, H63, D65, H66, H139, D210, and H268 together coordinate Zn(2+). Catalysis depends on D65, which acts as the Proton acceptor.

This sequence belongs to the RNase Z family. In terms of assembly, homodimer. Requires Zn(2+) as cofactor.

It carries out the reaction Endonucleolytic cleavage of RNA, removing extra 3' nucleotides from tRNA precursor, generating 3' termini of tRNAs. A 3'-hydroxy group is left at the tRNA terminus and a 5'-phosphoryl group is left at the trailer molecule.. Inhibited by high salt concentrations. Functionally, zinc phosphodiesterase, which displays some tRNA 3'-processing endonuclease activity. Probably involved in tRNA maturation, by removing a 3'-trailer from precursor tRNA. Can also catalyze the 5' end cleavage of the 5S rRNA. The polypeptide is Ribonuclease Z (Haloferax volcanii (strain ATCC 29605 / DSM 3757 / JCM 8879 / NBRC 14742 / NCIMB 2012 / VKM B-1768 / DS2) (Halobacterium volcanii)).